Here is a 407-residue protein sequence, read N- to C-terminus: Probable tRNA sulfurtransferase (407 aa).

Residues 61 to 165 form the THUMP domain; that stretch reads NEITNRLSKI…LDAIYMYEEV (105 aa). Residues 183–184, 208–209, Arg-265, Gly-287, and Gln-296 each bind ATP; these read ML and HF.

The protein belongs to the ThiI family.

It is found in the cytoplasm. The enzyme catalyses [ThiI sulfur-carrier protein]-S-sulfanyl-L-cysteine + a uridine in tRNA + 2 reduced [2Fe-2S]-[ferredoxin] + ATP + H(+) = [ThiI sulfur-carrier protein]-L-cysteine + a 4-thiouridine in tRNA + 2 oxidized [2Fe-2S]-[ferredoxin] + AMP + diphosphate. The catalysed reaction is [ThiS sulfur-carrier protein]-C-terminal Gly-Gly-AMP + S-sulfanyl-L-cysteinyl-[cysteine desulfurase] + AH2 = [ThiS sulfur-carrier protein]-C-terminal-Gly-aminoethanethioate + L-cysteinyl-[cysteine desulfurase] + A + AMP + 2 H(+). Its pathway is cofactor biosynthesis; thiamine diphosphate biosynthesis. Its function is as follows. Catalyzes the ATP-dependent transfer of a sulfur to tRNA to produce 4-thiouridine in position 8 of tRNAs, which functions as a near-UV photosensor. Also catalyzes the transfer of sulfur to the sulfur carrier protein ThiS, forming ThiS-thiocarboxylate. This is a step in the synthesis of thiazole, in the thiamine biosynthesis pathway. The sulfur is donated as persulfide by IscS. This chain is Probable tRNA sulfurtransferase, found in Staphylococcus aureus (strain MRSA252).